The primary structure comprises 109 residues: Aquaporin-2 (109 aa).

The Cytoplasmic segment spans residues 1–6 (SIAFSR). A helical transmembrane segment spans residues 7-27 (AVFSEFLATLLFVFFGLGSAL). The Extracellular portion of the chain corresponds to 28-35 (NWPQALPS). A helical transmembrane segment spans residues 36 to 54 (VLQIAMAFGLAIGTLVQTL). Over 55-59 (GHISG) the chain is Cytoplasmic. The segment at residues 60–69 (AHINPAVTVA) is an intramembrane region (discontinuously helical). The NPA 1 motif lies at 63–65 (NPA). The Cytoplasmic portion of the chain corresponds to 70 to 80 (CLVGCHVSFLR). Residues 81-102 (ATFYVAAQLLGAVAGAALLHEL) traverse the membrane as a helical segment. Over 103-109 (TPPDIRG) the chain is Extracellular.

This sequence belongs to the MIP/aquaporin (TC 1.A.8) family. In terms of assembly, homotetramer. In terms of processing, serine phosphorylation is necessary and sufficient for expression at the apical membrane. Endocytosis is not phosphorylation-dependent. N-glycosylated.

It localises to the apical cell membrane. The protein resides in the basolateral cell membrane. Its subcellular location is the cell membrane. The protein localises to the cytoplasmic vesicle membrane. It is found in the golgi apparatus. It localises to the trans-Golgi network membrane. The catalysed reaction is H2O(in) = H2O(out). It catalyses the reaction glycerol(in) = glycerol(out). Functionally, forms a water-specific channel that provides the plasma membranes of renal collecting duct with high permeability to water, thereby permitting water to move in the direction of an osmotic gradient. Plays an essential role in renal water homeostasis. Could also be permeable to glycerol. The sequence is that of Aquaporin-2 from Amblysomus hottentotus (Hottentot golden mole).